The following is a 150-amino-acid chain: Arginine repressor (150 aa).

It belongs to the ArgR family.

The protein localises to the cytoplasm. The protein operates within amino-acid biosynthesis; L-arginine biosynthesis [regulation]. In terms of biological role, regulates arginine biosynthesis genes. In Ruminiclostridium cellulolyticum (strain ATCC 35319 / DSM 5812 / JCM 6584 / H10) (Clostridium cellulolyticum), this protein is Arginine repressor.